An 829-amino-acid polypeptide reads, in one-letter code: FAST kinase domain-containing protein 1, mitochondrial (829 aa).

N6-acetyllysine is present on Lys-346. In terms of domain architecture, RAP spans 761–821 (IAIELLDVRA…KDARMDYLRE (61 aa)).

Belongs to the FAST kinase family. In terms of tissue distribution, expression detected in spleen, testis, colon, heart, smooth muscle, kidney, brain, lung, liver, brown and white adipose tissue with highest expression in heart and brown adipose tissue.

It is found in the mitochondrion. Functionally, involved in the down-regulation of mitochondrial MT-ND3 mRNA levels which leads to decreased respiratory complex I abundance and activity. The polypeptide is FAST kinase domain-containing protein 1, mitochondrial (Fastkd1) (Mus musculus (Mouse)).